A 100-amino-acid chain; its full sequence is MDLTPREKDKLLLFTAALVAERRKARGLKLNHPEAIALISAAILEGARDGRTVAELMNYGRTILTRDEVMDGIPEMIPDVQIEATFPDGTKLVTVHQPII.

It belongs to the urease gamma subunit family. As to quaternary structure, heterotrimer of UreA (gamma), UreB (beta) and UreC (alpha) subunits. Three heterotrimers associate to form the active enzyme.

It is found in the cytoplasm. It carries out the reaction urea + 2 H2O + H(+) = hydrogencarbonate + 2 NH4(+). The protein operates within nitrogen metabolism; urea degradation; CO(2) and NH(3) from urea (urease route): step 1/1. The chain is Urease subunit gamma from Tolumonas auensis (strain DSM 9187 / NBRC 110442 / TA 4).